A 45-amino-acid chain; its full sequence is Myotoxin-3 (45 aa).

Intrachain disulfides connect Cys4/Cys36, Cys11/Cys30, and Cys18/Cys37.

As to quaternary structure, monomer. As to expression, expressed by the venom gland.

The protein resides in the secreted. Its function is as follows. Cationic peptide that possesses multiple functions. It acts as a cell-penetrating peptide (CPP), and as a potent voltage-gated potassium channel (Kv) inhibitor. It exhibits antimicrobial activities, hind limb paralysis, and severe muscle necrosis by a non-enzymatic mechanism. The chain is Myotoxin-3 from Crotalus viridis viridis (Prairie rattlesnake).